The primary structure comprises 37 residues: Large ribosomal subunit protein bL36A (37 aa).

It belongs to the bacterial ribosomal protein bL36 family.

In Methylobacillus flagellatus (strain ATCC 51484 / DSM 6875 / VKM B-1610 / KT), this protein is Large ribosomal subunit protein bL36A.